A 106-amino-acid chain; its full sequence is Small ribosomal subunit protein uS10 (106 aa).

This sequence belongs to the universal ribosomal protein uS10 family. In terms of assembly, part of the 30S ribosomal subunit.

Involved in the binding of tRNA to the ribosomes. This is Small ribosomal subunit protein uS10 from Prochlorococcus marinus (strain MIT 9312).